The chain runs to 681 residues: Minichromosome maintenance domain-containing protein 2 (681 aa).

Serine 292 bears the Phosphoserine mark. In terms of domain architecture, MCM spans 533–621 (RQFTTEDFEK…LIAALLFETS (89 aa)).

Its function is as follows. Plays an important role in meiotic recombination and associated DNA double-strand break repair. This Homo sapiens (Human) protein is Minichromosome maintenance domain-containing protein 2 (MCMDC2).